Reading from the N-terminus, the 195-residue chain is MRTGAVSRKTKETEIEVAVDLDGRGTAHISTGIGFFDHMLEQLARHSLIDMTIKAKGDLHIDDHHTVEDTGIALGQAVRQALGDRAGITRYADVLLPMDETLTRVAVDVSGRPYLVFRTHFLRDKIGTFDTELVREFFQAFTTHLGANIHVETLYGENAHHISESSFKGLARALRVALTLDPRQLGEIPSTKGVL.

It belongs to the imidazoleglycerol-phosphate dehydratase family.

It localises to the cytoplasm. It catalyses the reaction D-erythro-1-(imidazol-4-yl)glycerol 3-phosphate = 3-(imidazol-4-yl)-2-oxopropyl phosphate + H2O. It functions in the pathway amino-acid biosynthesis; L-histidine biosynthesis; L-histidine from 5-phospho-alpha-D-ribose 1-diphosphate: step 6/9. This chain is Imidazoleglycerol-phosphate dehydratase, found in Beijerinckia indica subsp. indica (strain ATCC 9039 / DSM 1715 / NCIMB 8712).